Consider the following 314-residue polypeptide: Coiled-coil domain-containing protein 42 like-2 (314 aa).

Coiled-coil stretches lie at residues 34 to 139 (RLLE…RQEK) and 175 to 233 (NKLL…WESR).

The protein belongs to the CFAP73 family.

The sequence is that of Coiled-coil domain-containing protein 42 like-2 from Xenopus laevis (African clawed frog).